Reading from the N-terminus, the 456-residue chain is Bifunctional protein GlmU (456 aa).

A pyrophosphorylase region spans residues 1–229; that stretch reads MSNSSMSVVI…LSEVEGVNNR (229 aa). Residues 11-14, Lys25, Gln76, 81-82, 103-105, Gly140, Glu154, Asn169, and Asn227 contribute to the UDP-N-acetyl-alpha-D-glucosamine site; these read LAAG, GT, and YGD. Asp105 contacts Mg(2+). Position 227 (Asn227) interacts with Mg(2+). A linker region spans residues 230–250; the sequence is LQLAALERVYQSEQAEKLLLA. Residues 251 to 456 form an N-acetyltransferase region; that stretch reads GVMLLDPARF…QGWQRPIKKK (206 aa). Residues Arg333 and Lys351 each contribute to the UDP-N-acetyl-alpha-D-glucosamine site. The active-site Proton acceptor is His363. The UDP-N-acetyl-alpha-D-glucosamine site is built by Tyr366 and Asn377. Residues Ala380, 386 to 387, Ser405, Ala423, and Arg440 contribute to the acetyl-CoA site; that span reads NY.

The protein in the N-terminal section; belongs to the N-acetylglucosamine-1-phosphate uridyltransferase family. In the C-terminal section; belongs to the transferase hexapeptide repeat family. As to quaternary structure, homotrimer. Mg(2+) serves as cofactor.

Its subcellular location is the cytoplasm. It carries out the reaction alpha-D-glucosamine 1-phosphate + acetyl-CoA = N-acetyl-alpha-D-glucosamine 1-phosphate + CoA + H(+). It catalyses the reaction N-acetyl-alpha-D-glucosamine 1-phosphate + UTP + H(+) = UDP-N-acetyl-alpha-D-glucosamine + diphosphate. The protein operates within nucleotide-sugar biosynthesis; UDP-N-acetyl-alpha-D-glucosamine biosynthesis; N-acetyl-alpha-D-glucosamine 1-phosphate from alpha-D-glucosamine 6-phosphate (route II): step 2/2. It functions in the pathway nucleotide-sugar biosynthesis; UDP-N-acetyl-alpha-D-glucosamine biosynthesis; UDP-N-acetyl-alpha-D-glucosamine from N-acetyl-alpha-D-glucosamine 1-phosphate: step 1/1. Its pathway is bacterial outer membrane biogenesis; LPS lipid A biosynthesis. In terms of biological role, catalyzes the last two sequential reactions in the de novo biosynthetic pathway for UDP-N-acetylglucosamine (UDP-GlcNAc). The C-terminal domain catalyzes the transfer of acetyl group from acetyl coenzyme A to glucosamine-1-phosphate (GlcN-1-P) to produce N-acetylglucosamine-1-phosphate (GlcNAc-1-P), which is converted into UDP-GlcNAc by the transfer of uridine 5-monophosphate (from uridine 5-triphosphate), a reaction catalyzed by the N-terminal domain. The protein is Bifunctional protein GlmU of Yersinia enterocolitica serotype O:8 / biotype 1B (strain NCTC 13174 / 8081).